The chain runs to 436 residues: GTPase Der (436 aa).

EngA-type G domains lie at 4 to 167 (PTIA…PAQE) and 175 to 351 (IKFS…ESQN). Residues 10 to 17 (GRPNVGKS), 57 to 61 (DTGGI), 119 to 122 (NKVD), 181 to 188 (GRPNVGKS), 229 to 233 (DTAGM), and 294 to 297 (NKWD) each bind GTP. Positions 352–436 (TRIPSAVLND…PIHLIARKRK (85 aa)) constitute a KH-like domain.

It belongs to the TRAFAC class TrmE-Era-EngA-EngB-Septin-like GTPase superfamily. EngA (Der) GTPase family. As to quaternary structure, associates with the 50S ribosomal subunit.

In terms of biological role, GTPase that plays an essential role in the late steps of ribosome biogenesis. This Streptococcus suis (strain 98HAH33) protein is GTPase Der.